The sequence spans 409 residues: N-acetylglucosamine-6-phosphate deacetylase (409 aa).

Glu143 contacts a divalent metal cation. 154 to 155 (AH) contacts substrate. Positions 211 and 232 each coordinate a divalent metal cation. Substrate is bound by residues 235–236 (NA), Arg243, and 269–272 (DGIH). Asp294 functions as the Proton donor/acceptor in the catalytic mechanism. Substrate is bound at residue 328–330 (LSG).

Belongs to the metallo-dependent hydrolases superfamily. NagA family. Requires a divalent metal cation as cofactor.

It carries out the reaction N-acetyl-D-glucosamine 6-phosphate + H2O = D-glucosamine 6-phosphate + acetate. It participates in amino-sugar metabolism; N-acetylneuraminate degradation. Hydrolyzes the N-glycolyl group from N-glycolylglucosamine 6-phosphate (GlcNGc-6-P) in the N-glycolylneuraminic acid (Neu5Gc) degradation pathway. This Rattus norvegicus (Rat) protein is N-acetylglucosamine-6-phosphate deacetylase (Amdhd2).